Here is a 133-residue protein sequence, read N- to C-terminus: ATP synthase epsilon chain (133 aa).

The protein belongs to the ATPase epsilon chain family. In terms of assembly, F-type ATPases have 2 components, CF(1) - the catalytic core - and CF(0) - the membrane proton channel. CF(1) has five subunits: alpha(3), beta(3), gamma(1), delta(1), epsilon(1). CF(0) has three main subunits: a, b and c.

The protein localises to the cell membrane. In terms of biological role, produces ATP from ADP in the presence of a proton gradient across the membrane. The sequence is that of ATP synthase epsilon chain from Bacillus anthracis (strain A0248).